The primary structure comprises 179 residues: uncharacterized protein (179 aa).

Residues 139–172 adopt a coiled-coil conformation; the sequence is IEDLGKYIKSDRIEKEALREELEKILNTLVKHLE.

This is an uncharacterized protein from Methanocaldococcus jannaschii (strain ATCC 43067 / DSM 2661 / JAL-1 / JCM 10045 / NBRC 100440) (Methanococcus jannaschii).